Consider the following 208-residue polypeptide: Small ribosomal subunit protein uS4 (208 aa).

An S4 RNA-binding domain is found at 98-158 (RRLDNVVYRL…EKSRKIACIN (61 aa)).

This sequence belongs to the universal ribosomal protein uS4 family. In terms of assembly, part of the 30S ribosomal subunit. Contacts protein S5. The interaction surface between S4 and S5 is involved in control of translational fidelity.

Its function is as follows. One of the primary rRNA binding proteins, it binds directly to 16S rRNA where it nucleates assembly of the body of the 30S subunit. Functionally, with S5 and S12 plays an important role in translational accuracy. This is Small ribosomal subunit protein uS4 from Geobacter metallireducens (strain ATCC 53774 / DSM 7210 / GS-15).